A 225-amino-acid chain; its full sequence is Jeltraxin (225 aa).

A signal peptide spans 1 to 19; the sequence is MKGLVIFFCLFYGCHVAGA. A Pentraxin (PTX) domain is found at 21-223; sequence GKTIMLFPQK…IVVLRNQFIP (203 aa). A disulfide bridge connects residues C51 and C112. Ca(2+) is bound by residues D75 and N76. N87 carries an N-linked (GlcNAc...) asparagine glycan. Ca(2+)-binding residues include E153, Q154, D155, and Q165. N-linked (GlcNAc...) asparagine glycosylation occurs at N207.

As to quaternary structure, homodecamer consisting of two homopentamer units. Pentraxin (or pentaxin) have a discoid arrangement of 5 non-covalently bound subunits. Ca(2+) is required as a cofactor. Post-translationally, glycosylated. In terms of tissue distribution, oviduct. Highest expression levels were detected in the pars convoluta with lower levels detected in the pars recta. No expression was detected in the pars uterina.

It is found in the secreted. Calcium-dependent beta-galactose specific lectin. This chain is Jeltraxin, found in Lepidobatrachus laevis (Budgett's frog).